We begin with the raw amino-acid sequence, 484 residues long: Polyamine oxidase 3 (484 aa).

Positions 47, 55, 236, and 423 each coordinate FAD. The Microbody targeting signal motif lies at 482–484 (SRL).

Belongs to the flavin monoamine oxidase family. FAD is required as a cofactor. In terms of tissue distribution, widely expressed.

It is found in the peroxisome. The catalysed reaction is spermine + O2 + H2O = 3-aminopropanal + spermidine + H2O2. It carries out the reaction N(1)-acetylspermine + O2 + H2O = 3-acetamidopropanal + spermidine + H2O2. The enzyme catalyses norspermine + O2 + H2O = norspermidine + 3-aminopropanal + H2O2. It catalyses the reaction spermidine + O2 + H2O = 3-aminopropanal + putrescine + H2O2. The catalysed reaction is thermospermine + O2 + H2O = 3-aminopropanal + spermidine + H2O2. It participates in amine and polyamine degradation; spermine degradation. The protein operates within amine and polyamine degradation; spermidine degradation. In terms of biological role, flavoenzyme involved in polyamine back-conversion. Catalyzes the oxidation of the secondary amino group of polyamines, such as spermine, spermidine and their acetyl derivatives. Substrate preference is spermidine &gt; norspermine &gt; thermospermine &gt; N(1)-acetylspermine &gt; spermine. No activity detected when putrescine is used as substrate. Plays an important role in the regulation of polyamine intracellular concentration. The polypeptide is Polyamine oxidase 3 (Oryza sativa subsp. japonica (Rice)).